We begin with the raw amino-acid sequence, 160 residues long: S-adenosylmethionine decarboxylase proenzyme (160 aa).

The active-site Schiff-base intermediate with substrate; via pyruvic acid is the serine 73. Serine 73 carries the pyruvic acid (Ser); by autocatalysis modification. Histidine 78 acts as the Proton acceptor; for processing activity in catalysis. The active-site Proton donor; for catalytic activity is cysteine 93.

The protein belongs to the prokaryotic AdoMetDC family. Type 1 subfamily. In terms of assembly, heterotetramer of two alpha and two beta chains arranged as a dimer of alpha/beta heterodimers. Requires pyruvate as cofactor. Post-translationally, is synthesized initially as an inactive proenzyme. Formation of the active enzyme involves a self-maturation process in which the active site pyruvoyl group is generated from an internal serine residue via an autocatalytic post-translational modification. Two non-identical subunits are generated from the proenzyme in this reaction, and the pyruvate is formed at the N-terminus of the alpha chain, which is derived from the carboxyl end of the proenzyme. The post-translation cleavage follows an unusual pathway, termed non-hydrolytic serinolysis, in which the side chain hydroxyl group of the serine supplies its oxygen atom to form the C-terminus of the beta chain, while the remainder of the serine residue undergoes an oxidative deamination to produce ammonia and the pyruvoyl group blocking the N-terminus of the alpha chain.

It catalyses the reaction S-adenosyl-L-methionine + H(+) = S-adenosyl 3-(methylsulfanyl)propylamine + CO2. It participates in amine and polyamine biosynthesis; S-adenosylmethioninamine biosynthesis; S-adenosylmethioninamine from S-adenosyl-L-methionine: step 1/1. Functionally, catalyzes the decarboxylation of S-adenosylmethionine to S-adenosylmethioninamine (dcAdoMet), the propylamine donor required for the synthesis of the polyamines spermine and spermidine from the diamine putrescine. This chain is S-adenosylmethionine decarboxylase proenzyme, found in Pseudomonas aeruginosa (strain LESB58).